The chain runs to 423 residues: Tyrosine--tRNA ligase (423 aa).

Residue Y35 participates in L-tyrosine binding. The short motif at 40-49 (PTAASLHVGH) is the 'HIGH' region element. Y170 and Q174 together coordinate L-tyrosine. The 'KMSKS' region motif lies at 231–235 (KFGKS). Residue K234 participates in ATP binding. The region spanning 353–419 (GPLVDLLVEV…GKKNLAAVEV (67 aa)) is the S4 RNA-binding domain.

It belongs to the class-I aminoacyl-tRNA synthetase family. TyrS type 1 subfamily. In terms of assembly, homodimer.

It localises to the cytoplasm. The catalysed reaction is tRNA(Tyr) + L-tyrosine + ATP = L-tyrosyl-tRNA(Tyr) + AMP + diphosphate + H(+). In terms of biological role, catalyzes the attachment of tyrosine to tRNA(Tyr) in a two-step reaction: tyrosine is first activated by ATP to form Tyr-AMP and then transferred to the acceptor end of tRNA(Tyr). The sequence is that of Tyrosine--tRNA ligase from Streptomyces griseus subsp. griseus (strain JCM 4626 / CBS 651.72 / NBRC 13350 / KCC S-0626 / ISP 5235).